Consider the following 786-residue polypeptide: Endonuclease MutS2 (786 aa).

334-341 is an ATP binding site; that stretch reads GPNTGGKT. A Smr domain is found at 711–786; the sequence is LDLRGERYEN…GNGATVVYFK (76 aa).

The protein belongs to the DNA mismatch repair MutS family. MutS2 subfamily. In terms of assembly, homodimer. Binds to stalled ribosomes, contacting rRNA.

Functionally, endonuclease that is involved in the suppression of homologous recombination and thus may have a key role in the control of bacterial genetic diversity. Acts as a ribosome collision sensor, splitting the ribosome into its 2 subunits. Detects stalled/collided 70S ribosomes which it binds and splits by an ATP-hydrolysis driven conformational change. Acts upstream of the ribosome quality control system (RQC), a ribosome-associated complex that mediates the extraction of incompletely synthesized nascent chains from stalled ribosomes and their subsequent degradation. Probably generates substrates for RQC. This Ligilactobacillus salivarius (strain UCC118) (Lactobacillus salivarius) protein is Endonuclease MutS2.